The sequence spans 209 residues: Kynurenine formamidase (209 aa).

W18 contacts substrate. H48, H52, and D54 together coordinate Zn(2+). The active-site Proton donor/acceptor is the H58. The Zn(2+) site is built by H160 and E172.

It belongs to the Cyclase 1 superfamily. KynB family. In terms of assembly, homodimer. It depends on Zn(2+) as a cofactor.

The catalysed reaction is N-formyl-L-kynurenine + H2O = L-kynurenine + formate + H(+). The protein operates within amino-acid degradation; L-tryptophan degradation via kynurenine pathway; L-kynurenine from L-tryptophan: step 2/2. Catalyzes the hydrolysis of N-formyl-L-kynurenine to L-kynurenine, the second step in the kynurenine pathway of tryptophan degradation. The polypeptide is Kynurenine formamidase (Sphingopyxis alaskensis (strain DSM 13593 / LMG 18877 / RB2256) (Sphingomonas alaskensis)).